The primary structure comprises 26 residues: QAVLGAGLPCNTTTSPIIKVCASGMK.

Cysteine 21 functions as the Acyl-thioester intermediate in the catalytic mechanism.

The protein belongs to the thiolase-like superfamily. Thiolase family. In terms of assembly, homotetramer. Post-translationally, succinylation, adjacent to a coenzyme A binding site. Desuccinylated by SIRT5.

It localises to the mitochondrion. It carries out the reaction 2 acetyl-CoA = acetoacetyl-CoA + CoA. This is Acetyl-CoA acetyltransferase from Sus scrofa (Pig).